The primary structure comprises 78 residues: Large ribosomal subunit protein bL28 (78 aa).

It belongs to the bacterial ribosomal protein bL28 family.

The polypeptide is Large ribosomal subunit protein bL28 (Nostoc sp. (strain PCC 7120 / SAG 25.82 / UTEX 2576)).